Reading from the N-terminus, the 956-residue chain is Translation initiation factor IF-2 (956 aa).

Residues 68 to 357 (APEAAAPKAP…GVSVPRGDGN (290 aa)) form a disordered region. Composition is skewed to low complexity over residues 86 to 123 (AKPA…APAV), 141 to 156 (PGNN…PRAG), 164 to 175 (PAAAPASGAGRP), and 212 to 235 (GPRP…RPAA). Composition is skewed to gly residues over residues 236 to 257 (GSGG…GGGN) and 276 to 324 (RGAG…GAGR). The span at 325-334 (GKQRKSKRAK) shows a compositional bias: basic residues. One can recognise a tr-type G domain in the interval 449 to 620 (ARPPVVTVMG…AVMLTADAAL (172 aa)). The segment at 458–465 (GHVDHGKT) is G1. 458 to 465 (GHVDHGKT) lines the GTP pocket. The G2 stretch occupies residues 483–487 (GITQH). Residues 508–511 (DTPG) are G3. Residues 508 to 512 (DTPGH) and 562 to 565 (NKID) contribute to the GTP site. The segment at 562-565 (NKID) is G4. The G5 stretch occupies residues 598-600 (SAR).

Belongs to the TRAFAC class translation factor GTPase superfamily. Classic translation factor GTPase family. IF-2 subfamily.

It is found in the cytoplasm. Its function is as follows. One of the essential components for the initiation of protein synthesis. Protects formylmethionyl-tRNA from spontaneous hydrolysis and promotes its binding to the 30S ribosomal subunits. Also involved in the hydrolysis of GTP during the formation of the 70S ribosomal complex. This Renibacterium salmoninarum (strain ATCC 33209 / DSM 20767 / JCM 11484 / NBRC 15589 / NCIMB 2235) protein is Translation initiation factor IF-2.